The following is a 221-amino-acid chain: GTPase Obg (221 aa).

The OBG-type G domain maps to 1–61 (PSALRLVLLN…LKYKLLEIVQ (61 aa)). Residues 10–13 (NKAD) and 42–44 (SAV) each bind GTP. In terms of domain architecture, OCT spans 82–162 (VVHRTKGQFQ…IGGISFEWEP (81 aa)).

The protein belongs to the TRAFAC class OBG-HflX-like GTPase superfamily. OBG GTPase family. In terms of assembly, monomer. Requires Mg(2+) as cofactor.

The protein resides in the cytoplasm. An essential GTPase which binds GTP, GDP and possibly (p)ppGpp with moderate affinity, with high nucleotide exchange rates and a fairly low GTP hydrolysis rate. Plays a role in control of the cell cycle, stress response, ribosome biogenesis and in those bacteria that undergo differentiation, in morphogenesis control. The chain is GTPase Obg from Corynebacterium melassecola.